Reading from the N-terminus, the 130-residue chain is MSMQDPIADMFTRIRNAQGANKVTVKMPSSKQKVAIAQVLKEEGFITGYSAESTVKPELEVELKYFEGKPVIETIERVSRPGLRIYKKRNELPNVMGGLGIAVVSTSKGLMTDRAARQAGLGGEIIGYVA.

It belongs to the universal ribosomal protein uS8 family. Part of the 30S ribosomal subunit. Contacts proteins S5 and S12.

Functionally, one of the primary rRNA binding proteins, it binds directly to 16S rRNA central domain where it helps coordinate assembly of the platform of the 30S subunit. This is Small ribosomal subunit protein uS8 from Idiomarina loihiensis (strain ATCC BAA-735 / DSM 15497 / L2-TR).